The chain runs to 91 residues: Preprofallaxidin-2 (91 aa).

The first 22 residues, 1-22 (MASLKKSLFLVLFLGLVSLSIC), serve as a signal peptide directing secretion. The propeptide occupies 23 to 49 (EKEKRENEGNENEEEEENHEEGSEEKR). The tract at residues 24 to 49 (KEKRENEGNENEEEEENHEEGSEEKR) is disordered. The segment covering 31 to 41 (GNENEEEEENH) has biased composition (acidic residues). Position 65 is a leucine amide (leucine 65). The propeptide occupies 69–73 (SEEKR). Position 89 is a leucine amide (leucine 89).

This sequence belongs to the frog skin active peptide (FSAP) family. Dermaseptin subfamily. In terms of tissue distribution, expressed by the skin glands.

The protein resides in the secreted. In terms of biological role, fallaxidin-3.1 shows antibacterial activity against the Gram-positive bacteria E.faecalis (MIC=100 uM) and L.lactis (MIC=100 uM). No antibacterial activity against the Gram-positive bacteria B.cereus, L.innocua, M.luteus, S.epidermidis, S.uberis and S.aureus, or the Gram-negative bacteria E.cloacae and E.coli. Functionally, fallaxidin-3.2 shows antibacterial activity against the Gram-positive bacteria E.faecalis (MIC=100 uM) and L.lactis (MIC=500 uM). No antibacterial activity against the Gram-positive bacteria B.cereus, L.innocua, M.luteus, S.epidermidis, S.uberis and S.aureus, or the Gram-negative bacteria E.cloacae and E.coli. This Litoria fallax (Eastern dwarf tree frog) protein is Preprofallaxidin-2.